The primary structure comprises 2293 residues: MKGHQFKSWIFELREIVREIKNSHYFLDSWTQFNSVGSFIHIFFHQERFRKLLDPRIFSILLLRNSQGSTSNRYFTIKGVGLFVVAALLYRINNRNMVESKNLYLKGLLPIPMNSIGPRNDTSEESFGSSNINRLIVSLLYLTKGKKISESCFRDPKESTWVLPITQKCIMPESNWSSRWWRNWIGKKRDFCCKISNETVAGIDISFKDKEKDIKYLEFLFVYYMDDPIRKGHDWELFDRLSPSKRRNIINLNSGQLFEILVKDWICYLMFAFREKIPIEVEGFFKQQGAGSTIQSNDIEHVSHLFSRNKWAISLQNCAQFHMWQFHQDLFVSWGKNPHESDFLRKISRENWIWLDNVWLVNKDRFFSKVRNVSSNIQYDSTRSSFVQVTDSSQLNGSSDQFIDPFDSISNEDSEYHYHTLFNQREIQQLKERSILLDPSFIQTEGREIESDRFPKYLSGYSSMPRLFTEREKRMNNHLLPEESEEFLGNPTRAIRSFFSDRWSELHLGSNPTERSTRDQKLLKKEQDVSFVPSRRSENKEIVNIFKIITYLQNTVSIHPISSDLGCDMVPKDELDMDSSNKISFLNKNPFFDLFHLFHERKRGGYTLRHESEERFQEMADLFTLSITEPDLVYHKGFAFSIDSYGLDQRQFLKEVFNSRDESKKKSLLVLPPIFYEENESFYRRIRKNWVRISCGNYLEDPKRVVFASNNIMEAVNQYRLIRNLIQIQFQYSPYGYIRNVLNRFFLMKRPDRNFEYGIQRDLIGNDTLNHSTIMKDTINQHLSNLKKSQKKWFDPLIFLSQTERSINRDPNAYRYKWSNGSKNFQEHLEHFVSERKSRFQVVFDQLCINQYSIDWSEVIDKKDLSKSLRFFLSKLLRFFLSKLLLFLSKLLLFLSNSLPFFFVSFENIPIHRSEIHIYELKGPNDQLCNQLLESIGLQIVHLKKLKPFLLDDHNTSQKSKFLINGGTISPFLFNKIPKWMIDSFHTRKNRRKSFDNTDSYFSIVSHDQDNWLNPVKPFQRSSLISSFSKANRLRFLNNPHHFCFYCNKRFPFYVEKTRLKNSDFTYGQFLTILFIHNKIFSSCGGKKKHAFLERDTISPSSIESQVSNIFISNDFPQSGDERYNLYKSFHFPIRSDPLVRRAIYSIADISGTPLIEGQRVNFERTYCQTLSDMNLSDSEEKSLHQYLNFNSNMGLIHTPCSEKYLQRKKRSLCLKKCVDKGQMDRTFQRDSAFSTLSKWNLFQTYMPWFFTSTGYKYLNLIFLDTFSDLLRILSSSQKFVSIFHDIMHGLDISWRILQKKLCLPQRNLISEISSKSLHNLLLSEEMIHRNNESSLISTHLRSPNVREVLYSILFLLLVAGYIVRTHLLFVSRAYSELQTEFEKIKSLMIPSYMIELRKLLDRYPTSELNSFWLKNLFLVALEQLGDCLEEIRGSGGNMLWGGDPAYGVKSIRSKKKDLKINFIDIIDLISIIPNPINRITFSRNTRHLSHTSKKIYSVIRKRKNVSGDWIDDKIESWVANSDSIDDKEREFLVQFSTLRAEKRIDQILLSLTHSDHLSKNDSGYQMIEQPGTIYLRYLVDIHKKYLMNYEFNTSCLAERRIFLAHYQTITYSQTSCGANSFHFPSHGKPFSLRLALSPSRSILVIGSIGTGRSYLVKYLATNSYVPFITVFLNKFLDNKPKGFFIDDIDIDDSDDIDASNDIHRELDTELELLTMMNALTMDMMSEIDRFYITLQFELAKAMSPCIIWIPNIHDLDVNESSYLALGLLVNSLSRDCERCSTRNILVIASTHIPQKVDPALIAPNKLNTCIKIRRLLIPQQRKHFFTLSYTRGFHLEKKMFHTNGFESITMGSSARDLVALTNEALSISITQKKSIIDTNTIRSALHRQTWDLRSQVRSVQDHGILFYQIGRAVAQNVLISNCPIDPISIYMKKKSCNEGDSYLYKWYFELGTSMKKFTILLYLLSCSAGSVAQDLWSLPGPDEKNRITSYGFIENDSDLVHGLLEVQGALVGSSRTEKDCSQFDNDRVTLLFRSEPRDPLYMMQDGSCSIVDQRFLYEKYESGFEEGEGEGVLDPQQIEEDLFNHIVWAPRIWRPRGFLFDCIERPNELGFPYLAGSFRGKRIIYDEKYELQENDSEFLQSGTMQYQRRDRSSKEQGFFRISQFIWDPADPLFLLFKDQPFVSVFSHREFFADEEMSKGLLTSQTDPPTSIYKRWFIKNTQEKHFELLIQRQRWLRTNSSLSNGFFRSNTRSESYQYLSNLFLSNGTLLDRMTKTLLKKRWLFSDEMKIGFM.

ATP is bound at residue 1647–1654 (GSIGTGRS).

The protein belongs to the Ycf2 family.

It localises to the plastid. Its subcellular location is the chloroplast stroma. Probable ATPase of unknown function. Its presence in a non-photosynthetic plant (Epifagus virginiana) and experiments in tobacco indicate that it has an essential function which is probably not related to photosynthesis. In Crucihimalaya wallichii (Rock-cress), this protein is Protein Ycf2 A.